The sequence spans 194 residues: A-type ATP synthase subunit E (194 aa).

The protein belongs to the V-ATPase E subunit family. Has multiple subunits with at least A(3), B(3), C, D, E, F, H, I and proteolipid K(x).

It is found in the cell membrane. Its function is as follows. Component of the A-type ATP synthase that produces ATP from ADP in the presence of a proton gradient across the membrane. This is A-type ATP synthase subunit E from Saccharolobus islandicus (strain M.16.27) (Sulfolobus islandicus).